Reading from the N-terminus, the 38-residue chain is Large ribosomal subunit protein bL36 (38 aa).

It belongs to the bacterial ribosomal protein bL36 family.

This chain is Large ribosomal subunit protein bL36, found in Paraburkholderia phymatum (strain DSM 17167 / CIP 108236 / LMG 21445 / STM815) (Burkholderia phymatum).